Here is a 299-residue protein sequence, read N- to C-terminus: Oxygen-dependent coproporphyrinogen-III oxidase (299 aa).

Ser-92 is a substrate binding site. Positions 96 and 106 each coordinate a divalent metal cation. His-106 functions as the Proton donor in the catalytic mechanism. Residue 108–110 (NVR) coordinates substrate. A divalent metal cation-binding residues include His-145 and His-175. Residues 240-275 (YVEFNLVWDRGTLFGLQTGGRTESILMSMPPLVRWE) are important for dimerization. 258–260 (GGR) is a substrate binding site.

Belongs to the aerobic coproporphyrinogen-III oxidase family. As to quaternary structure, homodimer. Requires a divalent metal cation as cofactor.

It localises to the cytoplasm. It carries out the reaction coproporphyrinogen III + O2 + 2 H(+) = protoporphyrinogen IX + 2 CO2 + 2 H2O. It functions in the pathway porphyrin-containing compound metabolism; protoporphyrin-IX biosynthesis; protoporphyrinogen-IX from coproporphyrinogen-III (O2 route): step 1/1. In terms of biological role, involved in the heme biosynthesis. Catalyzes the aerobic oxidative decarboxylation of propionate groups of rings A and B of coproporphyrinogen-III to yield the vinyl groups in protoporphyrinogen-IX. The chain is Oxygen-dependent coproporphyrinogen-III oxidase from Salmonella choleraesuis (strain SC-B67).